We begin with the raw amino-acid sequence, 249 residues long: Pyridoxine 5'-phosphate synthase (249 aa).

N12 contributes to the 3-amino-2-oxopropyl phosphate binding site. D14–H15 is a binding site for 1-deoxy-D-xylulose 5-phosphate. 3-amino-2-oxopropyl phosphate is bound at residue R23. H48 (proton acceptor) is an active-site residue. Residues R50 and H55 each contribute to the 1-deoxy-D-xylulose 5-phosphate site. The Proton acceptor role is filled by E75. A 1-deoxy-D-xylulose 5-phosphate-binding site is contributed by T105. H199 serves as the catalytic Proton donor. Residues G200 and G221–H222 contribute to the 3-amino-2-oxopropyl phosphate site.

This sequence belongs to the PNP synthase family. As to quaternary structure, homooctamer; tetramer of dimers.

Its subcellular location is the cytoplasm. The catalysed reaction is 3-amino-2-oxopropyl phosphate + 1-deoxy-D-xylulose 5-phosphate = pyridoxine 5'-phosphate + phosphate + 2 H2O + H(+). It functions in the pathway cofactor biosynthesis; pyridoxine 5'-phosphate biosynthesis; pyridoxine 5'-phosphate from D-erythrose 4-phosphate: step 5/5. Functionally, catalyzes the complicated ring closure reaction between the two acyclic compounds 1-deoxy-D-xylulose-5-phosphate (DXP) and 3-amino-2-oxopropyl phosphate (1-amino-acetone-3-phosphate or AAP) to form pyridoxine 5'-phosphate (PNP) and inorganic phosphate. In Roseobacter denitrificans (strain ATCC 33942 / OCh 114) (Erythrobacter sp. (strain OCh 114)), this protein is Pyridoxine 5'-phosphate synthase.